Here is a 162-residue protein sequence, read N- to C-terminus: 2-C-methyl-D-erythritol 2,4-cyclodiphosphate synthase (162 aa).

2 residues coordinate a divalent metal cation: aspartate 8 and histidine 10. Residues 8–10 (DVH) and 36–37 (HS) contribute to the 4-CDP-2-C-methyl-D-erythritol 2-phosphate site. An a divalent metal cation-binding site is contributed by histidine 44. Residues 58–60 (DIG), 63–67 (FPDTD), 102–108 (AQAPKMA), 134–137 (TTTE), phenylalanine 141, and arginine 144 contribute to the 4-CDP-2-C-methyl-D-erythritol 2-phosphate site.

The protein belongs to the IspF family. As to quaternary structure, homotrimer. It depends on a divalent metal cation as a cofactor.

The enzyme catalyses 4-CDP-2-C-methyl-D-erythritol 2-phosphate = 2-C-methyl-D-erythritol 2,4-cyclic diphosphate + CMP. The protein operates within isoprenoid biosynthesis; isopentenyl diphosphate biosynthesis via DXP pathway; isopentenyl diphosphate from 1-deoxy-D-xylulose 5-phosphate: step 4/6. Its function is as follows. Involved in the biosynthesis of isopentenyl diphosphate (IPP) and dimethylallyl diphosphate (DMAPP), two major building blocks of isoprenoid compounds. Catalyzes the conversion of 4-diphosphocytidyl-2-C-methyl-D-erythritol 2-phosphate (CDP-ME2P) to 2-C-methyl-D-erythritol 2,4-cyclodiphosphate (ME-CPP) with a corresponding release of cytidine 5-monophosphate (CMP). The chain is 2-C-methyl-D-erythritol 2,4-cyclodiphosphate synthase from Yersinia enterocolitica serotype O:8 / biotype 1B (strain NCTC 13174 / 8081).